The chain runs to 804 residues: Elongation factor G, mitochondrial (804 aa).

The N-terminal 9 residues, 1–9 (MVRPAQVRA), are a transit peptide targeting the mitochondrion. The 287-residue stretch at 103-389 (SKVRNIGIAA…GVCDYLPNPS (287 aa)) folds into the tr-type G domain. GTP-binding positions include 112–119 (AHIDSGKT), 187–191 (DTPGH), and 241–244 (NKMD).

This sequence belongs to the TRAFAC class translation factor GTPase superfamily. Classic translation factor GTPase family. EF-G/EF-2 subfamily.

Its subcellular location is the mitochondrion. Its pathway is protein biosynthesis; polypeptide chain elongation. Mitochondrial GTPase that catalyzes the GTP-dependent ribosomal translocation step during translation elongation. During this step, the ribosome changes from the pre-translocational (PRE) to the post-translocational (POST) state as the newly formed A-site-bound peptidyl-tRNA and P-site-bound deacylated tRNA move to the P and E sites, respectively. Catalyzes the coordinated movement of the two tRNA molecules, the mRNA and conformational changes in the ribosome. The sequence is that of Elongation factor G, mitochondrial (mef1) from Talaromyces stipitatus (strain ATCC 10500 / CBS 375.48 / QM 6759 / NRRL 1006) (Penicillium stipitatum).